The sequence spans 628 residues: Nuclear RNA export factor 1 (628 aa).

The tract at residues 47-83 (DTQSRYEDDDEPAVPVRASLTSASSRGRGGSSRGFGQ) is disordered. Residues 63-72 (RASLTSASSR) show a composition bias toward low complexity. Residues 100-179 (YKCRATGAAK…EFYTSKVPAP (80 aa)) enclose the RRM domain. LRR repeat units follow at residues 245–270 (NIVALSLSNNRIRHLDYASALVSIAK) and 271–294 (FVMELDLSHNHISTEKELEKFAGL). Residues 365–526 (LVEQFVTSYF…VAVISDQLFI (162 aa)) form the NTF2 domain. In terms of domain architecture, TAP-C spans 576–628 (PIREEMIKAMCQFSGMIPPFSEKCLADCAWNFDFACQKFNEIKSSVPAEAFAH).

It belongs to the NXF family. In terms of assembly, interacts with nucleoporins, Nup98, Nup153 and Nup214.

Its subcellular location is the nucleus. Functionally, involved in RNA export from the nucleus to the cytoplasm. The polypeptide is Nuclear RNA export factor 1 (nxf-1) (Caenorhabditis elegans).